The following is a 330-amino-acid chain: Cobalamin biosynthesis protein CobD (330 aa).

The next 4 membrane-spanning stretches (helical) occupy residues 60 to 80, 153 to 173, 227 to 247, and 308 to 328; these read TLVILTLAVFFTLLAIFPPIV, GIIAPLFWAVALSIFAPLLGV, LGIVAISFMAGYNGPQAWKIF, and IVLFTTFLLSLLFLLFRFVLT.

The protein belongs to the CobD/CbiB family.

The protein resides in the cell membrane. Its pathway is cofactor biosynthesis; adenosylcobalamin biosynthesis. Functionally, converts cobyric acid to cobinamide by the addition of aminopropanol on the F carboxylic group. In Desulfotalea psychrophila (strain LSv54 / DSM 12343), this protein is Cobalamin biosynthesis protein CobD.